The chain runs to 380 residues: Putative heat stress transcription factor B-4a (380 aa).

Residues 216–245 (LLRGNAALVQELAHMRKLYSDIIYFVQNHV) are hydrophobic repeat HR-A/B. 2 disordered regions span residues 268–296 (PAGGKAPASEVRGASGRSATSSSSLTVAE) and 314–380 (INEV…VSPP). Low complexity predominate over residues 278-296 (VRGASGRSATSSSSLTVAE). The Nuclear localization signal motif lies at 346-348 (RKR).

It belongs to the HSF family. Class B subfamily. As to quaternary structure, homotrimer. In terms of processing, exhibits temperature-dependent phosphorylation.

It is found in the nucleus. Transcriptional regulator that specifically binds DNA of heat shock promoter elements (HSE). In Oryza sativa subsp. japonica (Rice), this protein is Putative heat stress transcription factor B-4a (HSFB4A).